The chain runs to 314 residues: tRNA dimethylallyltransferase (314 aa).

ATP is bound at residue G12–T19. Substrate is bound at residue T14–T19. 2 interaction with substrate tRNA regions span residues D37–L40 and Q162–R166.

This sequence belongs to the IPP transferase family. In terms of assembly, monomer. It depends on Mg(2+) as a cofactor.

The catalysed reaction is adenosine(37) in tRNA + dimethylallyl diphosphate = N(6)-dimethylallyladenosine(37) in tRNA + diphosphate. Catalyzes the transfer of a dimethylallyl group onto the adenine at position 37 in tRNAs that read codons beginning with uridine, leading to the formation of N6-(dimethylallyl)adenosine (i(6)A). In Acinetobacter baumannii (strain SDF), this protein is tRNA dimethylallyltransferase.